An 84-amino-acid polypeptide reads, in one-letter code: Large ribosomal subunit protein bL27 (84 aa).

Positions M1–L21 are disordered. The span at A7–Q19 shows a compositional bias: polar residues.

This sequence belongs to the bacterial ribosomal protein bL27 family.

This chain is Large ribosomal subunit protein bL27, found in Clavibacter michiganensis subsp. michiganensis (strain NCPPB 382).